The sequence spans 156 residues: tRNA-specific adenosine deaminase (156 aa).

Residues 2–120 form the CMP/dCMP-type deaminase domain; the sequence is TNDIYFMTLA…GSLMNLLQQS (119 aa). His-53 serves as a coordination point for Zn(2+). Catalysis depends on Glu-55, which acts as the Proton donor. Residues Cys-83 and Cys-86 each coordinate Zn(2+).

This sequence belongs to the cytidine and deoxycytidylate deaminase family. Homodimer. Zn(2+) is required as a cofactor.

It carries out the reaction adenosine(34) in tRNA + H2O + H(+) = inosine(34) in tRNA + NH4(+). Its function is as follows. Catalyzes the deamination of adenosine to inosine at the wobble position 34 of tRNA(Arg2). This chain is tRNA-specific adenosine deaminase, found in Staphylococcus aureus (strain Mu50 / ATCC 700699).